The chain runs to 301 residues: Glycine--tRNA ligase alpha subunit (301 aa).

The protein belongs to the class-II aminoacyl-tRNA synthetase family. In terms of assembly, tetramer of two alpha and two beta subunits.

It localises to the cytoplasm. The catalysed reaction is tRNA(Gly) + glycine + ATP = glycyl-tRNA(Gly) + AMP + diphosphate. The sequence is that of Glycine--tRNA ligase alpha subunit from Glaesserella parasuis serovar 5 (strain SH0165) (Haemophilus parasuis).